A 259-amino-acid chain; its full sequence is Uridylate kinase (259 aa).

21 to 24 (KLSG) is an ATP binding site. G63 contacts UMP. The ATP site is built by G64 and R68. UMP is bound by residues D83 and 144–151 (TGNPYFTT). 3 residues coordinate ATP: T171, F177, and D180.

This sequence belongs to the UMP kinase family. Homohexamer.

Its subcellular location is the cytoplasm. It catalyses the reaction UMP + ATP = UDP + ADP. It functions in the pathway pyrimidine metabolism; CTP biosynthesis via de novo pathway; UDP from UMP (UMPK route): step 1/1. Inhibited by UTP. In terms of biological role, catalyzes the reversible phosphorylation of UMP to UDP. This Salinibacter ruber (strain DSM 13855 / M31) protein is Uridylate kinase.